We begin with the raw amino-acid sequence, 79 residues long: U-actitoxin-Avd9d (79 aa).

The N-terminal stretch at 1–19 (NLKVLAVFVLCAILVVVTA) is a signal peptide. A propeptide spanning residues 20–37 (ERRGTETGGYKKDTLEDL) is cleaved from the precursor. The 36-residue stretch at 44-79 (CFDSFKEATCHMAKTNRLCKTSAKYQINCKKTCGLC) folds into the ShKT domain. 3 disulfides stabilise this stretch: cysteine 44-cysteine 79, cysteine 53-cysteine 72, and cysteine 62-cysteine 76. The segment at 67–68 (KY) is crucial for binding to potassium channels.

This sequence belongs to the sea anemone type 1 potassium channel toxin family. Type 1b subfamily.

The protein localises to the secreted. Its subcellular location is the nematocyst. Functionally, inhibits voltage-gated potassium channels (Kv1/KCNA). The protein is U-actitoxin-Avd9d of Anemonia viridis (Snakelocks anemone).